A 214-amino-acid polypeptide reads, in one-letter code: Uridine kinase (214 aa).

Gly-15–Ser-22 provides a ligand contact to ATP.

Belongs to the uridine kinase family.

The protein localises to the cytoplasm. It catalyses the reaction uridine + ATP = UMP + ADP + H(+). It carries out the reaction cytidine + ATP = CMP + ADP + H(+). Its pathway is pyrimidine metabolism; CTP biosynthesis via salvage pathway; CTP from cytidine: step 1/3. It participates in pyrimidine metabolism; UMP biosynthesis via salvage pathway; UMP from uridine: step 1/1. The protein is Uridine kinase of Tolumonas auensis (strain DSM 9187 / NBRC 110442 / TA 4).